The chain runs to 152 residues: Large ribosomal subunit protein uL15 (152 aa).

The interval Met-1–Val-79 is disordered. Residues Gly-22 to Gln-35 show a composition bias toward gly residues.

This sequence belongs to the universal ribosomal protein uL15 family. In terms of assembly, part of the 50S ribosomal subunit.

Functionally, binds to the 23S rRNA. This Rubrobacter xylanophilus (strain DSM 9941 / JCM 11954 / NBRC 16129 / PRD-1) protein is Large ribosomal subunit protein uL15.